The following is a 690-amino-acid chain: UvrABC system protein B (690 aa).

The Helicase ATP-binding domain maps to 30–188; sequence QGVMDGQTNQ…QELISLHFVR (159 aa). 43–50 provides a ligand contact to ATP; that stretch reads GVTGSGKT. The Beta-hairpin motif lies at 96–119; sequence YYDFYQPEAYIPTMDKYIAKDLKI. The 167-residue stretch at 435 to 601 folds into the Helicase C-terminal domain; it reads QIDDLLEEIR…SIVKSVDQVL (167 aa). The region spanning 641–676 is the UVR domain; it reads YAMAEELRLEMQEAAESMEFEKAAYLRDEVTKLEDA.

The protein belongs to the UvrB family. In terms of assembly, forms a heterotetramer with UvrA during the search for lesions. Interacts with UvrC in an incision complex.

The protein resides in the cytoplasm. Functionally, the UvrABC repair system catalyzes the recognition and processing of DNA lesions. A damage recognition complex composed of 2 UvrA and 2 UvrB subunits scans DNA for abnormalities. Upon binding of the UvrA(2)B(2) complex to a putative damaged site, the DNA wraps around one UvrB monomer. DNA wrap is dependent on ATP binding by UvrB and probably causes local melting of the DNA helix, facilitating insertion of UvrB beta-hairpin between the DNA strands. Then UvrB probes one DNA strand for the presence of a lesion. If a lesion is found the UvrA subunits dissociate and the UvrB-DNA preincision complex is formed. This complex is subsequently bound by UvrC and the second UvrB is released. If no lesion is found, the DNA wraps around the other UvrB subunit that will check the other stand for damage. The chain is UvrABC system protein B from Chlorobium phaeobacteroides (strain BS1).